We begin with the raw amino-acid sequence, 96 residues long: uncharacterized protein (96 aa).

A signal peptide spans Met-1–Ala-15.

This is an uncharacterized protein from Caenorhabditis elegans.